The primary structure comprises 325 residues: UDP-N-acetylglucosamine transporter (325 aa).

The next 8 helical transmembrane spans lie at 8–24 (VSLG…VLTM), 42–58 (AVVV…ILLV), 138–154 (VYQW…VAFV), 173–189 (FVGL…SGFA), 209–225 (IQLG…GVYI), 246–262 (IVVV…AAVI), 268–284 (ILKG…STLI), and 295–311 (TSVF…ATFL).

It belongs to the nucleotide-sugar transporter family. SLC35A subfamily. Interacts with SLC35A2; the interaction is reduced in the presence of SLC35A4. Found in a complex with SLC35A2 and SLC35A4. Interacts with MGAT4B. Post-translationally, O-Glcnacylation regulates the stability of SLC35A3 and the specific complex formation with MGAT4B.

It is found in the golgi apparatus membrane. It catalyses the reaction UMP(out) + UDP-N-acetyl-alpha-D-glucosamine(in) = UMP(in) + UDP-N-acetyl-alpha-D-glucosamine(out). Functionally, transports diphosphate-N-acetylglucosamine (UDP-GlcNAc) from the cytosol into the lumen of the Golgi apparatus, functioning as an antiporter that exchanges UDP-N-acetyl-alpha-D-glucosamine for UMP. May supply UDP-GlcNAc as substrate for Golgi-resident glycosyltransferases that generate highly branched, multiantennary complex N-glycans and keratan sulfate. However, the exact role of SLC35A3 still needs to be elucidated, it could be a member of a catalytically more efficient multiprotein complex rather than function independently as a single transporter. This is UDP-N-acetylglucosamine transporter (SLC35A3) from Homo sapiens (Human).